The chain runs to 317 residues: Transaldolase (317 aa).

Catalysis depends on K132, which acts as the Schiff-base intermediate with substrate.

The protein belongs to the transaldolase family. Type 1 subfamily. In terms of assembly, homodimer.

The protein localises to the cytoplasm. It carries out the reaction D-sedoheptulose 7-phosphate + D-glyceraldehyde 3-phosphate = D-erythrose 4-phosphate + beta-D-fructose 6-phosphate. Its pathway is carbohydrate degradation; pentose phosphate pathway; D-glyceraldehyde 3-phosphate and beta-D-fructose 6-phosphate from D-ribose 5-phosphate and D-xylulose 5-phosphate (non-oxidative stage): step 2/3. Functionally, transaldolase is important for the balance of metabolites in the pentose-phosphate pathway. This chain is Transaldolase (talB), found in Escherichia coli O104:H4 (strain 2009EL-2071).